The following is a 75-amino-acid chain: MANKPFFRRRKVCPFSGDNAPVIDYKDTRLLQRYISERGKIVPSRITAVSAKKQRELAAAIKRARFLALLPYAVK.

It belongs to the bacterial ribosomal protein bS18 family. As to quaternary structure, part of the 30S ribosomal subunit. Forms a tight heterodimer with protein bS6.

Functionally, binds as a heterodimer with protein bS6 to the central domain of the 16S rRNA, where it helps stabilize the platform of the 30S subunit. In Cereibacter sphaeroides (strain KD131 / KCTC 12085) (Rhodobacter sphaeroides), this protein is Small ribosomal subunit protein bS18.